A 1288-amino-acid chain; its full sequence is MEIQQTHRKINRPLVSLVLAGALISAIPQESHAAFFTTVIIPAIVGGIATGTAVGTVSGLLSWGLKQAEEANKTPDKPDKVWRIQAGKGFNEFPNKEYDLYKSLLSSKIDGGWDWGNAARHYWVKGGQWNKLEVDMKDAVGTYKLSGLRNFTGGDLDVNMQKATLRLGQFNGNSFTSYKDSADRTTRVNFNAKNISIDNFVEINNRVGSGAGRKASSTVLTLQASEGITSSKNAEISLYDGATLNLASNSVKLNGNVWMGRLQYVGAYLAPSYSTINTSKVQGEVDFNHLTVGDQNAAQAGIIASNKTHIGTLDLWQSAGLNIIAPPEGGYKDKPNSTTSQSGTKNDKKEISQNNNSNTEVINPPNNTQKTETEPTQVIDGPFAGGKDTVVNIFHLNTKADGTIKVGGFKASLTTNAAHLNIGKGGVNLSNQASGRTLLVENLTGNITVDGPLRVNNQVGGYALAGSSANFEFKAGVDTKNGTATFNNDISLGRFVNLKVDAHTANFKGIDTGNGGFNTLDFSGVTDKVNINKLITASTNVAVKNFNINELIVKTNGISVGEYTHFSEDIGSQSRINTVRLETGTRSIFSGGVKFKSGEKLVINDFYYSPWNYFDARNVKNVEITRKFASSTPENPWGTSKLMFNNLTLGQNAVMDYSQFSNLTIQGDFINNQGTINYLVRGGKVATLNVGNAAAMMFNNDIDSATGFYKPLIKINSAQDLIKNTEHVLLKAKIIGYGNVSTGTNGISNVNLEEQFKERLALYNNNNRMDTCVVRNTDDIKACGMAIGNQSMVNNPDNYKYLIGKAWRNIGISKTANGSKISVYYLGNSTPTENGGNTTNLPTNTTNNAHSANYALVKNAPFAHSATPNLVAINQHDFGTIESVFELANRSKDIDTLYTHSGAQGRDLLQTLLIDSHDAGYARQMIDNTSTGEITKQLNAATDALNNVASLEHKQSGLQTLSLSNAMILNSRLVNLSRKHTNHINSFAQRLQALKGQEFASLESAAEVLYQFAPKYEKPTNVWANAIGGASLNSGSNASLYGTSAGVDAFLNGNVEAIVGGFGSYGYSSFSNQANSLNSGANNANFGVYSRFFANQHEFDFEAQGALGSDQSSLNFKSTLLQDLNQSYNYLAYSATARASYGYDFAFFRNALVLKPSVGVSYNHLGSTNFKSNSQSQVALKNGASSQHLFNANANVEARYYYGDTSYFYLHAGVLQEFAHFGSNDVASLNTFKINAARSPLSTYARAMMGGELQLAKEVFLNLGVVYLHNLISNASHFASNLGMRYSF.

The signal sequence occupies residues 1-33; it reads MEIQQTHRKINRPLVSLVLAGALISAIPQESHA. The disordered stretch occupies residues 326–377; sequence PPEGGYKDKPNSTTSQSGTKNDKKEISQNNNSNTEVINPPNNTQKTETEPTQ. A compositionally biased stretch (polar residues) spans 352–376; that stretch reads SQNNNSNTEVINPPNNTQKTETEPT. Residues 1015-1288 enclose the Autotransporter domain; that stretch reads KYEKPTNVWA…ASNLGMRYSF (274 aa).

The protein localises to the periplasm. It is found in the secreted. It localises to the cell surface. Its subcellular location is the cell outer membrane. Induces vacuolation of eukaryotic cells. Causes ulceration and gastric lesions. The protein is Vacuolating cytotoxin autotransporter (vacA) of Helicobacter pylori (strain J99 / ATCC 700824) (Campylobacter pylori J99).